We begin with the raw amino-acid sequence, 75 residues long: Kappa-thalatoxin-Cad2a (75 aa).

An N-terminal signal peptide occupies residues 1-22; sequence MKFQMIAAVLLIAFCLCVVVTA. Residues 23–40 constitute a propeptide that is removed on maturation; the sequence is RMELQDVEDMKNGSFQKR. Positions 43–75 constitute a ShKT domain; the sequence is CIDTIPKSRCTAFQCKNSMKYRLSFCRKTCGTC. 3 cysteine pairs are disulfide-bonded: Cys-43/Cys-75, Cys-52/Cys-68, and Cys-57/Cys-72.

The protein belongs to the sea anemone type 1 potassium channel toxin family. Type 1a subfamily.

It localises to the secreted. It is found in the nematocyst. Its function is as follows. Inhibits voltage-gated potassium channels (Kv) with higher potency for Kv1.1/KCNA1 and Kv1.3/KCNA3. This chain is Kappa-thalatoxin-Cad2a, found in Cryptodendrum adhaesivum (Adhesive sea anemone).